Consider the following 329-residue polypeptide: BTB/POZ domain-containing adapter for CUL3-mediated RhoA degradation protein 1 (329 aa).

Residues 1-31 (MSAEASGPAPAAAECLESPSPSSVEPGSPSY) are disordered. The BTB domain maps to 41–109 (KYVKLNVGGS…LRDGSVPLPE (69 aa)).

The protein belongs to the BACURD family. Homotetramer; forms a two-fold symmetric tetramer in solution. Interacts with CUL3; interaction is direct and forms a 5:5 heterodecamer. Component of the BCR(KCTD13) E3 ubiquitin ligase complex, at least composed of CUL3, KCTD13/BACURD1 and RBX1. Interacts with RHOA; with a preference for RhoA-GDP. Interacts with POLD2 and PCNA. Interacts with SPRTN.

The protein resides in the nucleus. The protein operates within protein modification; protein ubiquitination. Substrate-specific adapter of a BCR (BTB-CUL3-RBX1) E3 ubiquitin-protein ligase complex required for synaptic transmission. The BCR(KCTD13) E3 ubiquitin ligase complex mediates the ubiquitination of RHOA, leading to its degradation by the proteasome, thereby regulating the actin cytoskeleton and promoting synaptic transmission. The sequence is that of BTB/POZ domain-containing adapter for CUL3-mediated RhoA degradation protein 1 (Kctd13) from Mus musculus (Mouse).